Reading from the N-terminus, the 185-residue chain is Ribosome-recycling factor (185 aa).

The protein belongs to the RRF family.

The protein localises to the cytoplasm. Responsible for the release of ribosomes from messenger RNA at the termination of protein biosynthesis. May increase the efficiency of translation by recycling ribosomes from one round of translation to another. The polypeptide is Ribosome-recycling factor (Campylobacter lari (strain RM2100 / D67 / ATCC BAA-1060)).